Consider the following 105-residue polypeptide: UPF0145 protein Mevan_1624 (105 aa).

This sequence belongs to the UPF0145 family.

The protein is UPF0145 protein Mevan_1624 of Methanococcus vannielii (strain ATCC 35089 / DSM 1224 / JCM 13029 / OCM 148 / SB).